A 255-amino-acid polypeptide reads, in one-letter code: Sec-independent protein translocase protein TatC (255 aa).

7 helical membrane-spanning segments follow: residues 28–48 (VAAV…IYAL), 56–76 (YLPE…LAPF), 80–100 (LMIS…GFIA), 121–141 (LFYA…FGFF), 165–185 (LFFA…LIWV), 195–212 (NSRP…MVLT), and 216–236 (VFSQ…GVFF).

This sequence belongs to the TatC family. In terms of assembly, the Tat system comprises two distinct complexes: a TatABC complex, containing multiple copies of TatA, TatB and TatC subunits, and a separate TatA complex, containing only TatA subunits. Substrates initially bind to the TatABC complex, which probably triggers association of the separate TatA complex to form the active translocon.

The protein localises to the cell membrane. Functionally, part of the twin-arginine translocation (Tat) system that transports large folded proteins containing a characteristic twin-arginine motif in their signal peptide across membranes. Together with TatB, TatC is part of a receptor directly interacting with Tat signal peptides. This is Sec-independent protein translocase protein TatC from Azotobacter chroococcum mcd 1.